The primary structure comprises 65 residues: Weak toxin CM-11 (65 aa).

5 disulfides stabilise this stretch: Cys3-Cys24, Cys6-Cys11, Cys17-Cys42, Cys46-Cys57, and Cys58-Cys63.

The protein belongs to the three-finger toxin family. Ancestral subfamily. Orphan group II sub-subfamily. In terms of tissue distribution, expressed by the venom gland.

It localises to the secreted. In terms of biological role, binds with low affinity to muscular (alpha-1-beta-1-delta-epsilon/CHRNA1-CHRNB1-CHRND-CHRNE) and very low affinity to neuronal (alpha-7/CHRNA7) nicotinic acetylcholine receptor (nAChR). The chain is Weak toxin CM-11 from Naja haje haje (Egyptian cobra).